Consider the following 409-residue polypeptide: Evolutionarily conserved signaling intermediate in Toll pathway, mitochondrial (409 aa).

The N-terminal 26 residues, 1-26 (MLRRAQCLLRLHGNGGHSLVSRFRNY), are a transit peptide targeting the mitochondrion. Disordered regions lie at residues 27–53 (ATDEGNPKQNPNPNPRAQKPGTKNLPA) and 383–409 (EEIEGGASVPATSDNSSQDEHISSRQK). Positions 400 to 409 (QDEHISSRQK) are enriched in basic and acidic residues.

It belongs to the ECSIT family. Interacts with Traf6. Associates with mitochondrial complex I assembly intermediates during its biogenesis.

It localises to the cytoplasm. It is found in the nucleus. Its subcellular location is the mitochondrion. Functionally, as part of the MCIA complex, involved in the assembly of the mitochondrial complex I. Involved in the innate immune response; promotes the production of antibacterial peptides. The sequence is that of Evolutionarily conserved signaling intermediate in Toll pathway, mitochondrial from Drosophila melanogaster (Fruit fly).